We begin with the raw amino-acid sequence, 218 residues long: ATP-dependent Clp protease proteolytic subunit 2 (218 aa).

The active-site Nucleophile is the serine 114. The active site involves histidine 139.

This sequence belongs to the peptidase S14 family. As to quaternary structure, fourteen ClpP subunits assemble into 2 heptameric rings which stack back to back to give a disk-like structure with a central cavity, resembling the structure of eukaryotic proteasomes.

It localises to the cytoplasm. The enzyme catalyses Hydrolysis of proteins to small peptides in the presence of ATP and magnesium. alpha-casein is the usual test substrate. In the absence of ATP, only oligopeptides shorter than five residues are hydrolyzed (such as succinyl-Leu-Tyr-|-NHMec, and Leu-Tyr-Leu-|-Tyr-Trp, in which cleavage of the -Tyr-|-Leu- and -Tyr-|-Trp bonds also occurs).. Functionally, cleaves peptides in various proteins in a process that requires ATP hydrolysis. Has a chymotrypsin-like activity. Plays a major role in the degradation of misfolded proteins. Probably partially responsible for degradation of ECF sigma factor SigR prime. This chain is ATP-dependent Clp protease proteolytic subunit 2, found in Streptomyces coelicolor (strain ATCC BAA-471 / A3(2) / M145).